A 384-amino-acid chain; its full sequence is Zinc finger CCCH domain-containing protein 12 (384 aa).

2 disordered regions span residues 1-32 (MSHH…NLGD) and 46-81 (WAMN…SAAS). Polar residues predominate over residues 50–60 (PDNTSGDNNGP). The segment covering 70-81 (SSSSATTTSAAS) has biased composition (low complexity). 2 C3H1-type zinc fingers span residues 91 to 118 (FFKT…HTVE) and 172 to 200 (SFKG…HDEA). The disordered stretch occupies residues 211–231 (LGPGGYGSGGGGGSGGGSVGG). Residues 212-231 (GPGGYGSGGGGGSGGGSVGG) show a composition bias toward gly residues. The C3H1-type 3 zinc finger occupies 260–288 (NWKTRICNKWEITGYCPFGAKCHFAHGAA). A disordered region spans residues 299–335 (EEEGKDGVSPNPDTKQTVQNPKGLSDTTTLLSPGVPH). The segment covering 309-329 (NPDTKQTVQNPKGLSDTTTLL) has biased composition (polar residues).

The chain is Zinc finger CCCH domain-containing protein 12 from Arabidopsis thaliana (Mouse-ear cress).